Here is an 87-residue protein sequence, read N- to C-terminus: Developmentally-regulated ectodermal protein (87 aa).

Positions M1–A16 are cleaved as a signal peptide.

The protein is Developmentally-regulated ectodermal protein of Tripneustes gratilla (Hawaian sea urchin).